The primary structure comprises 22 residues: 50 kDa cell wall protein (22 aa).

Its subcellular location is the secreted. The protein resides in the cell wall. The polypeptide is 50 kDa cell wall protein (Nicotiana tabacum (Common tobacco)).